A 390-amino-acid chain; its full sequence is Putative transposase YncI (390 aa).

Belongs to the transposase 11 family.

The polypeptide is Putative transposase YncI (yncI) (Escherichia coli O157:H7).